A 507-amino-acid chain; its full sequence is RNA-binding protein Nova-1 (507 aa).

The interval 1-44 (MMAAAPIQQNGTHTGVPIDLDPPDSRKRPLEAPPEAGSTKRTNT) is disordered. Positions 27 to 43 (KRPLEAPPEAGSTKRTN) match the Bipartite nuclear localization signal motif. The region spanning 49–116 (QYFLKVLIPS…EALNAVHGFI (68 aa)) is the KH 1 domain. The segment at 139–171 (QTTVNPDRIKQTLPSSPTTTKSSPSDPMTTSRA) is disordered. Over residues 150-169 (TLPSSPTTTKSSPSDPMTTS) the composition is skewed to low complexity. A Phosphoserine modification is found at Ser-154. 2 KH domains span residues 171 to 237 (ANQV…VELI) and 421 to 488 (KDVV…QYLI). The interval 419–503 (GSKDVVEIAV…YEQGVRAANP (85 aa)) is required for RNA binding.

In terms of assembly, interacts with PTBP2; the interaction is direct. In terms of tissue distribution, expressed in cerebellum, brain stem, hippocampus, and frontal cortex.

Its subcellular location is the nucleus. In terms of biological role, functions to regulate alternative splicing in neurons by binding pre-mRNA in a sequence-specific manner to activate exon inclusion or exclusion. It binds specifically to the sequences 5'-YCAY-3' and regulates splicing in only a subset of regulated exons. Binding to an exonic 5'-YCAY-3' cluster changes the protein complexes assembled on pre-mRNA, blocking U1 snRNP binding and exon inclusion, whereas binding to an intronic 5'-YCAY-3' cluster enhances spliceosome assembly and exon inclusion. Binding to 5'-YCAY-3' clusters results in a local and asymmetric action to regulate spliceosome assembly and alternative splicing in neurons. Binding to an exonic 5'-YCAY-3' cluster changed the protein complexes assembled on pre-mRNA, blocking U1 snRNP (small nuclear ribonucleoprotein) binding and exon inclusion, whereas binding to an intronic 5'-YCAY-3' cluster enhanced spliceosome assembly and exon inclusion. With NOVA1, they perform unique biological functions in different brain areas and cell types. Autoregulates its own expression by acting as a splicing repressor. Acts to activate the inclusion of exon E3A in the glycine receptor alpha-2 chain and of exon E9 in gamma-aminobutyric-acid receptor gamma-2 subunit via a distal downstream UCAU-rich intronic splicing enhancer. Acts to regulate a novel glycine receptor alpha-2 chain splice variant (alpha-2N) in developing spinal cord. In Homo sapiens (Human), this protein is RNA-binding protein Nova-1.